Reading from the N-terminus, the 135-residue chain is Cytochrome b5, seed isoform (135 aa).

The 77-residue stretch at Ser-5–Asp-81 folds into the Cytochrome b5 heme-binding domain. Heme contacts are provided by His-40 and His-64. Residues Phe-107 to Val-127 traverse the membrane as a helical segment.

This sequence belongs to the cytochrome b5 family. As to expression, specifically expressed in developing seeds.

Its subcellular location is the endoplasmic reticulum membrane. The protein localises to the microsome membrane. Cytochrome b5 is a membrane bound hemoprotein which function as an electron carrier for several membrane bound oxygenases. May play a key role in the modification by desaturation of fatty acids in the endoplasmic reticulum, which in the developing seed is utilized for membrane synthesis and in the developmentally regulated production of large amounts of storage lipids. The polypeptide is Cytochrome b5, seed isoform (Nicotiana tabacum (Common tobacco)).